The chain runs to 254 residues: GTP cyclohydrolase III (254 aa).

The protein belongs to the archaeal-type GTP cyclohydrolase family.

It catalyses the reaction GTP + 3 H2O = 2-amino-5-formylamino-6-(5-phospho-D-ribosylamino)pyrimidin-4(3H)-one + 2 phosphate + 2 H(+). In terms of biological role, catalyzes the formation of 2-amino-5-formylamino-6-ribofuranosylamino-4(3H)-pyrimidinone ribonucleotide monophosphate and inorganic phosphate from GTP. Also has an independent pyrophosphate phosphohydrolase activity. In Methanobrevibacter smithii (strain ATCC 35061 / DSM 861 / OCM 144 / PS), this protein is GTP cyclohydrolase III.